The sequence spans 237 residues: Purine nucleoside phosphorylase DeoD-type (237 aa).

Histidine 4 is a binding site for a purine D-ribonucleoside. Phosphate-binding positions include glycine 20, arginine 24, arginine 43, and 87–90; that span reads RVGS. A purine D-ribonucleoside contacts are provided by residues 179 to 181 and 203 to 204; these read EME and SD. Catalysis depends on aspartate 204, which acts as the Proton donor.

It belongs to the PNP/UDP phosphorylase family. In terms of assembly, homohexamer; trimer of homodimers.

It carries out the reaction a purine D-ribonucleoside + phosphate = a purine nucleobase + alpha-D-ribose 1-phosphate. The catalysed reaction is a purine 2'-deoxy-D-ribonucleoside + phosphate = a purine nucleobase + 2-deoxy-alpha-D-ribose 1-phosphate. Catalyzes the reversible phosphorolytic breakdown of the N-glycosidic bond in the beta-(deoxy)ribonucleoside molecules, with the formation of the corresponding free purine bases and pentose-1-phosphate. The protein is Purine nucleoside phosphorylase DeoD-type of Dichelobacter nodosus (strain VCS1703A).